The chain runs to 262 residues: Kallikrein-1 (262 aa).

Residues 1 to 18 (MWFLVLCLALSLGGTGAA) form the signal peptide. The propeptide at 19–24 (PPIQSR) is activation peptide. Residues 25 to 259 (IVGGWECEQH…YVKWIEDTIA (235 aa)) enclose the Peptidase S1 domain. 5 disulfide bridges follow: cysteine 31-cysteine 174, cysteine 50-cysteine 66, cysteine 153-cysteine 220, cysteine 185-cysteine 199, and cysteine 210-cysteine 235. Histidine 65 (charge relay system) is an active-site residue. O-linked (GalNAc...) serine glycosylation is present at serine 93. An N-linked (GlcNAc...) asparagine glycan is attached at asparagine 102. A glycan (O-linked (GalNAc...) serine) is linked at serine 104. Asparagine 108 carries N-linked (GlcNAc...) asparagine glycosylation. Aspartate 120 serves as the catalytic Charge relay system. Residue asparagine 165 is glycosylated (N-linked (GlcNAc...) asparagine; partial). O-linked (GalNAc...) serine glycosylation is present at serine 167. Serine 214 (charge relay system) is an active-site residue.

The protein belongs to the peptidase S1 family. Kallikrein subfamily. In terms of processing, the O-linked polysaccharides on Ser-93, Ser-104 and Ser-167 are probably the mucin type linked to GalNAc. In PubMed:3163150, GalNAc was detected with the corresponding peptides but not located. As to expression, isoform 2 is expressed in pancreas, salivary glands, kidney, colon, prostate gland, testis, spleen and the colon adenocarcinoma cell line T84.

It catalyses the reaction Preferential cleavage of Arg-|-Xaa bonds in small molecule substrates. Highly selective action to release kallidin (lysyl-bradykinin) from kininogen involves hydrolysis of Met-|-Xaa or Leu-|-Xaa.. Glandular kallikreins cleave Met-Lys and Arg-Ser bonds in kininogen to release Lys-bradykinin. In terms of biological role, (Microbial infection) Cleaves Neisseria meningitidis NHBA in saliva; Neisseria is an obligate commensal of the nasopharyngeal mucosa. The chain is Kallikrein-1 (KLK1) from Homo sapiens (Human).